Consider the following 197-residue polypeptide: Imidazoleglycerol-phosphate dehydratase (197 aa).

Belongs to the imidazoleglycerol-phosphate dehydratase family.

It localises to the cytoplasm. The enzyme catalyses D-erythro-1-(imidazol-4-yl)glycerol 3-phosphate = 3-(imidazol-4-yl)-2-oxopropyl phosphate + H2O. It participates in amino-acid biosynthesis; L-histidine biosynthesis; L-histidine from 5-phospho-alpha-D-ribose 1-diphosphate: step 6/9. This chain is Imidazoleglycerol-phosphate dehydratase, found in Methylococcus capsulatus (strain ATCC 33009 / NCIMB 11132 / Bath).